A 436-amino-acid polypeptide reads, in one-letter code: tRNA(Ile)-lysidine synthase (436 aa).

25 to 30 (SGGLDS) is an ATP binding site.

Belongs to the tRNA(Ile)-lysidine synthase family.

It is found in the cytoplasm. The enzyme catalyses cytidine(34) in tRNA(Ile2) + L-lysine + ATP = lysidine(34) in tRNA(Ile2) + AMP + diphosphate + H(+). Functionally, ligates lysine onto the cytidine present at position 34 of the AUA codon-specific tRNA(Ile) that contains the anticodon CAU, in an ATP-dependent manner. Cytidine is converted to lysidine, thus changing the amino acid specificity of the tRNA from methionine to isoleucine. This is tRNA(Ile)-lysidine synthase from Serratia proteamaculans (strain 568).